The chain runs to 384 residues: NAD-capped RNA hydrolase NPY1 (384 aa).

The Zn(2+) site is built by cysteine 179, cysteine 182, cysteine 197, and cysteine 206. In terms of domain architecture, Nudix hydrolase spans 219–351 (PRTDPTVIIA…AGGYRVPFKN (133 aa)). Positions 256, 272, 276, and 322 each coordinate Mg(2+). Residues 256 to 258 (AGF), glutamate 272, glutamate 276, and glutamate 322 each bind substrate. Residues 257–278 (GFMEPSETIEEACIREIWEETG) carry the Nudix box motif. The short motif at 378 to 380 (KTS) is the Microbody targeting signal element.

This sequence belongs to the Nudix hydrolase family. NudC subfamily. As to quaternary structure, homodimer. The cofactor is Mg(2+). Requires Zn(2+) as cofactor.

Its subcellular location is the peroxisome. It catalyses the reaction a 5'-end NAD(+)-phospho-ribonucleoside in mRNA + H2O = a 5'-end phospho-adenosine-phospho-ribonucleoside in mRNA + beta-nicotinamide D-ribonucleotide + 2 H(+). It carries out the reaction NAD(+) + H2O = beta-nicotinamide D-ribonucleotide + AMP + 2 H(+). The catalysed reaction is NADH + H2O = reduced beta-nicotinamide D-ribonucleotide + AMP + 2 H(+). MRNA decapping enzyme that specifically removes the nicotinamide adenine dinucleotide (NAD) cap from a subset of mRNAs by hydrolyzing the diphosphate linkage to produce nicotinamide mononucleotide (NMN) and 5' monophosphate mRNA. The NAD-cap is present at the 5'-end of some RNAs; in contrast to the canonical N7 methylguanosine (m7G) cap, the NAD cap promotes mRNA decay. Mediates the hydrolysis of some nucleoside diphosphate derivatives. The polypeptide is NAD-capped RNA hydrolase NPY1 (Saccharomyces cerevisiae (strain ATCC 204508 / S288c) (Baker's yeast)).